A 213-amino-acid polypeptide reads, in one-letter code: Calcineurin B-like protein 8 (213 aa).

Gly2 carries N-myristoyl glycine lipidation. 4 consecutive EF-hand domains span residues 31 to 66 (EVEA…RNSN), 67 to 102 (KKNL…FHPE), 104 to 139 (PLGD…LLNE), and 148 to 183 (AVEQ…NPAL). Ca(2+) is bound by residues Asp161, Asn163, Asp165, Lys167, and Glu172.

The protein belongs to the calcineurin regulatory subunit family. In terms of assembly, homodimer. Expressed at low levels in roots, shoots, culms, leaves and young spikelets.

Its subcellular location is the cell membrane. Acts as a calcium sensor. May function as positive regulator of salt stress responses. CBL proteins interact with CIPK serine-threonine protein kinases. Binding of a CBL protein to the regulatory NAF domain of a CIPK protein lead to the activation of the kinase in a calcium-dependent manner. The polypeptide is Calcineurin B-like protein 8 (CBL8) (Oryza sativa subsp. japonica (Rice)).